A 198-amino-acid chain; its full sequence is Phycocyanobilin lyase CpcT homolog (198 aa).

The protein belongs to the CpcT/CpeT biliprotein lyase family.

Functionally, covalently attaches a chromophore to Cys residue(s) of phycobiliproteins. In vitro is not seen to act as a chromophore lyase for ApcA1, ApcA2, ApcB, ApcD, ApcF, CpcB or PecB, the lyase activity is therefore unsure. The chain is Phycocyanobilin lyase CpcT homolog (cpcT2) from Nostoc sp. (strain PCC 7120 / SAG 25.82 / UTEX 2576).